A 448-amino-acid chain; its full sequence is MSFTPGKQSSSRASSGNRSGNGILKWADQSDQSRNVQTRGRRAQPKQTATSQQPSGGNVVPYYSWFSGITQFQKGKEFEFAEGQGVPIAPGVPATEAKGYWYRHNRRSFKTRDGNQRQLLPRWYFYYLGTGPHAKDQYGTDIDGVFWVASNQADVNTPADILDRDPSSDEAIPTRFPPGTVLPQGYYIEGSGRSAPNSRSTSRASSRASSAGSRSRANSGNRTPTSGVTPDMADQIVSLVLAKLGKDATKPQQVTKQTAKEIRQKILNKPRQKRSPNKQCTVQQCFGKRGPNQNFGGGEMLKLGTSDPQFPILAELAPTAGAFFFGSRLELAKVQNLSGNLDEPQKDVYELRYNGAIRFDSTLSGFETIMKVLNENLNAYQQQDGMMNMSPKPQRQRGQKNGQGENDNISVAAPKSRVQQNKSRELTAEDISLLKKMDEPYTEDTSEI.

The tract at residues 1–55 (MSFTPGKQSSSRASSGNRSGNGILKWADQSDQSRNVQTRGRRAQPKQTATSQQPS) is disordered. The span at 9-22 (SSSRASSGNRSGNG) shows a compositional bias: low complexity. Polar residues-rich tracts occupy residues 29–38 (QSDQSRNVQT) and 45–55 (PKQTATSQQPS). Residues 52-194 (QQPSGGNVVP…GYYIEGSGRS (143 aa)) form an RNA-binding region. Residues 61 to 190 (PYYSWFSGIT…VLPQGYYIEG (130 aa)) enclose the CoV N NTD domain. RNA is bound by residues Arg-106, Arg-122, and Arg-164. Positions 157 to 231 (TPADILDRDP…RTPTSGVTPD (75 aa)) are disordered. Ser-167 carries the post-translational modification Phosphoserine; by host. A Phosphothreonine; by host modification is found at Thr-174. Ser-191 is subject to Phosphoserine; by host. The span at 193 to 223 (RSAPNSRSTSRASSRASSAGSRSRANSGNRT) shows a compositional bias: low complexity. The CoV N CTD domain maps to 259-384 (AKEIRQKILN…ENLNAYQQQD (126 aa)). The interval 266 to 384 (ILNKPRQKRS…ENLNAYQQQD (119 aa)) is dimerization. The segment at 385–448 (GMMNMSPKPQ…EPYTEDTSEI (64 aa)) is disordered. Ser-390 carries the phosphoserine; by host modification. The span at 399–409 (QKNGQGENDNI) shows a compositional bias: polar residues. The segment covering 422–439 (KSRELTAEDISLLKKMDE) has biased composition (basic and acidic residues). Position 423 is a phosphoserine; by host (Ser-423). At Thr-427 the chain carries Phosphothreonine; by host.

This sequence belongs to the betacoronavirus nucleocapsid protein family. As to quaternary structure, homooligomer. Both monomeric and oligomeric forms interact with RNA. Interacts with protein M. Interacts with NSP3; this interaction serves to tether the genome to the newly translated replicase-transcriptase complex at a very early stage of infection. In terms of processing, ADP-ribosylated. The ADP-ribosylation is retained in the virion during infection. Phosphorylated on serine and threonine residues.

Its subcellular location is the virion. It is found in the host endoplasmic reticulum-Golgi intermediate compartment. The protein resides in the host Golgi apparatus. Packages the positive strand viral genome RNA into a helical ribonucleocapsid (RNP) and plays a fundamental role during virion assembly through its interactions with the viral genome and membrane protein M. Plays an important role in enhancing the efficiency of subgenomic viral RNA transcription as well as viral replication. In Bovine coronavirus (strain F15) (BCoV), this protein is Nucleoprotein.